A 734-amino-acid chain; its full sequence is Photosystem I P700 chlorophyll a apoprotein A2 (734 aa).

A run of 8 helical transmembrane segments spans residues 46–69, 135–158, 175–199, 273–291, 330–353, 369–395, 417–439, and 517–535; these read IFASHFGQLAVIFLWTSGNLFHVA, LYQGALFLLGLAAVSLAAGWLHLQ, LNHHLSGLFGVSSLAWSGHLVHVAI, IAHHHLAIAVLFIIAGHQY, LHFQLGLALASLGVITSLVAQHMY, AALYTHHQYIAGFIMSGAFAHGAIFFI, AIISHLSWASLFLGFHTLGLYVH, and FLVHHAIALGLHTTTLILV. Residues cysteine 559 and cysteine 568 each contribute to the [4Fe-4S] cluster site. 2 helical membrane-spanning segments follow: residues 575-596 and 643-665; these read AFYLAIFWMLNTIGWVTFYWHW and LSVWAWMFLFGHLIWATGFMFLI. Positions 654, 662, and 670 each coordinate chlorophyll a. Tryptophan 671 lines the phylloquinone pocket. The helical transmembrane segment at 707–727 threads the bilayer; it reads LVGLAHFSVGYIFTYAAFLIA.

It belongs to the PsaA/PsaB family. The PsaA/B heterodimer binds the P700 chlorophyll special pair and subsequent electron acceptors. PSI consists of a core antenna complex that captures photons, and an electron transfer chain that converts photonic excitation into a charge separation. The eukaryotic PSI reaction center is composed of at least 11 subunits. The cofactor is P700 is a chlorophyll a/chlorophyll a' dimer, A0 is one or more chlorophyll a, A1 is one or both phylloquinones and FX is a shared 4Fe-4S iron-sulfur center..

The protein resides in the plastid. It localises to the chloroplast thylakoid membrane. The catalysed reaction is reduced [plastocyanin] + hnu + oxidized [2Fe-2S]-[ferredoxin] = oxidized [plastocyanin] + reduced [2Fe-2S]-[ferredoxin]. Functionally, psaA and PsaB bind P700, the primary electron donor of photosystem I (PSI), as well as the electron acceptors A0, A1 and FX. PSI is a plastocyanin-ferredoxin oxidoreductase, converting photonic excitation into a charge separation, which transfers an electron from the donor P700 chlorophyll pair to the spectroscopically characterized acceptors A0, A1, FX, FA and FB in turn. Oxidized P700 is reduced on the lumenal side of the thylakoid membrane by plastocyanin. The polypeptide is Photosystem I P700 chlorophyll a apoprotein A2 (Chaetosphaeridium globosum (Charophycean green alga)).